The chain runs to 241 residues: Capsid protein (241 aa).

Residues 1–26 (MSPASSWKRKRPSSSSAQASKKRRVY) carry the Bipartite nuclear localization signal motif. The tract at residues 1 to 30 (MSPASSWKRKRPSSSSAQASKKRRVYRPAV) is disordered.

The protein belongs to the geminiviridae capsid protein family. As to quaternary structure, homomultimer. Interacts with the movement protein. Binds to single-stranded and double-stranded viral DNA.

It localises to the virion. Its subcellular location is the host nucleus. Its function is as follows. Encapsidates the viral genome into characteristic twinned ('geminate') particles. Binds the genomic viral ssDNA and shuttles it into and out of the cell nucleus. Plays a role in protection of the genome from degradation, virus acquisition and transmission by insect vectors, infectivity, and systemic movement. The CP of monopartite geminiviruses is absolutely essential for virus movement. The protein is Capsid protein of Avena sativa (Oat).